Consider the following 373-residue polypeptide: RNA 3'-terminal phosphate cyclase-like protein (373 aa).

This sequence belongs to the RNA 3'-terminal cyclase family. Type 2 subfamily. Part of the small subunit (SSU) processome, composed of more than 70 proteins and the RNA chaperone small nucleolar RNA (snoRNA) U3. Interacts with BMS1.

It localises to the nucleus. Its subcellular location is the nucleolus. Its function is as follows. As part of the small subunit (SSU) processome, it plays a role in 40S-ribosomal-subunit biogenesis in the early pre-rRNA processing steps at sites A0, A1 and A2 that are required for proper maturation of the 18S RNA. Activates BMS1 by promoting GDP/GTP exchange. Does not have cyclase activity. The chain is RNA 3'-terminal phosphate cyclase-like protein (RCL1) from Bos taurus (Bovine).